A 165-amino-acid chain; its full sequence is Peptidyl-prolyl cis-trans isomerase-like 1 (165 aa).

One can recognise a PPIase cyclophilin-type domain in the interval 3–157 (EREEVILDTS…IVQKILYALN (155 aa)).

It belongs to the cyclophilin-type PPIase family. PPIL1 subfamily.

The catalysed reaction is [protein]-peptidylproline (omega=180) = [protein]-peptidylproline (omega=0). Functionally, PPIases accelerate the folding of proteins. It catalyzes the cis-trans isomerization of proline imidic peptide bonds in oligopeptides. This is Peptidyl-prolyl cis-trans isomerase-like 1 (cyp3) from Rhizopus delemar (strain RA 99-880 / ATCC MYA-4621 / FGSC 9543 / NRRL 43880) (Mucormycosis agent).